The following is a 291-amino-acid chain: ATP synthase gamma chain (291 aa).

Belongs to the ATPase gamma chain family. In terms of assembly, F-type ATPases have 2 components, CF(1) - the catalytic core - and CF(0) - the membrane proton channel. CF(1) has five subunits: alpha(3), beta(3), gamma(1), delta(1), epsilon(1). CF(0) has three main subunits: a, b and c.

It localises to the cell inner membrane. Functionally, produces ATP from ADP in the presence of a proton gradient across the membrane. The gamma chain is believed to be important in regulating ATPase activity and the flow of protons through the CF(0) complex. In Cupriavidus metallidurans (strain ATCC 43123 / DSM 2839 / NBRC 102507 / CH34) (Ralstonia metallidurans), this protein is ATP synthase gamma chain.